The sequence spans 299 residues: Putative S-adenosyl-L-methionine-dependent methyltransferase MAB_0027c (299 aa).

S-adenosyl-L-methionine-binding positions include aspartate 126 and 155-156 (DL).

This sequence belongs to the UPF0677 family.

Functionally, exhibits S-adenosyl-L-methionine-dependent methyltransferase activity. This Mycobacteroides abscessus (strain ATCC 19977 / DSM 44196 / CCUG 20993 / CIP 104536 / JCM 13569 / NCTC 13031 / TMC 1543 / L948) (Mycobacterium abscessus) protein is Putative S-adenosyl-L-methionine-dependent methyltransferase MAB_0027c.